The chain runs to 274 residues: Diaminopimelate epimerase (274 aa).

2 residues coordinate substrate: Asn-11 and Asn-76. The active-site Proton donor is Cys-85. Residues Gly-86–Asn-87, Asn-157, Asn-189, and Glu-207–Arg-208 each bind substrate. The active-site Proton acceptor is Cys-216. Position 217-218 (Gly-217–Thr-218) interacts with substrate.

The protein belongs to the diaminopimelate epimerase family. As to quaternary structure, homodimer.

The protein localises to the cytoplasm. It catalyses the reaction (2S,6S)-2,6-diaminopimelate = meso-2,6-diaminopimelate. It functions in the pathway amino-acid biosynthesis; L-lysine biosynthesis via DAP pathway; DL-2,6-diaminopimelate from LL-2,6-diaminopimelate: step 1/1. Catalyzes the stereoinversion of LL-2,6-diaminopimelate (L,L-DAP) to meso-diaminopimelate (meso-DAP), a precursor of L-lysine and an essential component of the bacterial peptidoglycan. This is Diaminopimelate epimerase from Thermobifida fusca (strain YX).